The following is a 65-amino-acid chain: UPF0337 protein PA4738 (65 aa).

Belongs to the UPF0337 (CsbD) family.

This Pseudomonas aeruginosa (strain ATCC 15692 / DSM 22644 / CIP 104116 / JCM 14847 / LMG 12228 / 1C / PRS 101 / PAO1) protein is UPF0337 protein PA4738.